The primary structure comprises 202 residues: N-(5'-phosphoribosyl)anthranilate isomerase (202 aa).

Belongs to the TrpF family.

It catalyses the reaction N-(5-phospho-beta-D-ribosyl)anthranilate = 1-(2-carboxyphenylamino)-1-deoxy-D-ribulose 5-phosphate. Its pathway is amino-acid biosynthesis; L-tryptophan biosynthesis; L-tryptophan from chorismate: step 3/5. This Geobacter metallireducens (strain ATCC 53774 / DSM 7210 / GS-15) protein is N-(5'-phosphoribosyl)anthranilate isomerase.